The following is a 425-amino-acid chain: Trigger factor (425 aa).

The PPIase FKBP-type domain occupies 163–248 (GDTAVIDFEG…IHEIKTKELP (86 aa)).

This sequence belongs to the FKBP-type PPIase family. Tig subfamily.

The protein localises to the cytoplasm. The catalysed reaction is [protein]-peptidylproline (omega=180) = [protein]-peptidylproline (omega=0). In terms of biological role, involved in protein export. Acts as a chaperone by maintaining the newly synthesized protein in an open conformation. Functions as a peptidyl-prolyl cis-trans isomerase. The sequence is that of Trigger factor from Bacillus mycoides (strain KBAB4) (Bacillus weihenstephanensis).